We begin with the raw amino-acid sequence, 860 residues long: Leucine--tRNA ligase (860 aa).

Residues 42–52 (PYPSGRLHMGH) carry the 'HIGH' region motif. The short motif at 619–623 (KMSKS) is the 'KMSKS' region element. Position 622 (Lys622) interacts with ATP.

This sequence belongs to the class-I aminoacyl-tRNA synthetase family.

It localises to the cytoplasm. It carries out the reaction tRNA(Leu) + L-leucine + ATP = L-leucyl-tRNA(Leu) + AMP + diphosphate. This Klebsiella pneumoniae subsp. pneumoniae (strain ATCC 700721 / MGH 78578) protein is Leucine--tRNA ligase.